Consider the following 143-residue polypeptide: Ribosome maturation factor RimP (143 aa).

It belongs to the RimP family.

The protein localises to the cytoplasm. Functionally, required for maturation of 30S ribosomal subunits. The sequence is that of Ribosome maturation factor RimP from Borrelia hermsii (strain HS1 / DAH).